A 68-amino-acid polypeptide reads, in one-letter code: Large ribosomal subunit protein uL29 (68 aa).

It belongs to the universal ribosomal protein uL29 family.

The polypeptide is Large ribosomal subunit protein uL29 (Acidiphilium cryptum (strain JF-5)).